A 70-amino-acid chain; its full sequence is Conotoxin Lt11.6 (70 aa).

The signal sequence occupies residues 1–26 (MMFRLTSVGSFLLVIVFLNLVVLTNA). 4 disulfide bridges follow: Cys-27/Cys-41, Cys-34/Cys-46, Cys-40/Cys-50, and Cys-45/Cys-54. The propeptide occupies 58 to 70 (AQRQKLLRSFGQR).

Belongs to the conotoxin I2 superfamily. In terms of tissue distribution, expressed by the venom duct.

It localises to the secreted. The sequence is that of Conotoxin Lt11.6 from Conus litteratus (Lettered cone).